The primary structure comprises 329 residues: 31 kDa immunogenic protein (329 aa).

Positions 1–28 are cleaved as a signal peptide; it reads MKFGSKIRRLAVAAVAGAIALGASFAVA.

This is 31 kDa immunogenic protein (bcsP31) from Brucella abortus biovar 1 (strain 9-941).